The following is a 103-amino-acid chain: Urease subunit beta (103 aa).

It belongs to the urease beta subunit family. In terms of assembly, heterotrimer of UreA (gamma), UreB (beta) and UreC (alpha) subunits. Three heterotrimers associate to form the active enzyme.

The protein localises to the cytoplasm. It carries out the reaction urea + 2 H2O + H(+) = hydrogencarbonate + 2 NH4(+). The protein operates within nitrogen metabolism; urea degradation; CO(2) and NH(3) from urea (urease route): step 1/1. In Blochmanniella floridana, this protein is Urease subunit beta.